The following is a 237-amino-acid chain: DNA repair protein RecO (237 aa).

This sequence belongs to the RecO family.

Its function is as follows. Involved in DNA repair and RecF pathway recombination. This chain is DNA repair protein RecO, found in Rickettsia conorii (strain ATCC VR-613 / Malish 7).